Here is a 200-residue protein sequence, read N- to C-terminus: 3-isopropylmalate dehydratase small subunit (200 aa).

Belongs to the LeuD family. LeuD type 1 subfamily. In terms of assembly, heterodimer of LeuC and LeuD.

It carries out the reaction (2R,3S)-3-isopropylmalate = (2S)-2-isopropylmalate. It functions in the pathway amino-acid biosynthesis; L-leucine biosynthesis; L-leucine from 3-methyl-2-oxobutanoate: step 2/4. Its function is as follows. Catalyzes the isomerization between 2-isopropylmalate and 3-isopropylmalate, via the formation of 2-isopropylmaleate. The chain is 3-isopropylmalate dehydratase small subunit from Arthrobacter sp. (strain FB24).